The chain runs to 97 residues: Large ribosomal subunit protein bL28 (97 aa).

Belongs to the bacterial ribosomal protein bL28 family.

This is Large ribosomal subunit protein bL28 from Rickettsia rickettsii (strain Iowa).